A 393-amino-acid polypeptide reads, in one-letter code: Acyltransferase ato1 (393 aa).

This sequence belongs to the lysine N-acyltransferase mbtK family.

It functions in the pathway siderophore biosynthesis; ferrichrome biosynthesis. L-ornithine N(5)-monooxygenase; part of the siderophore biosynthetic pathway. Omphalotus olearius produces ferrichrome A, but no other siderophore has been detected. Ferrichrome A consists of a hexapeptide ring made up of one glycine, two serine, and three N(5)-hydroxyornithine amino acid residues, the latter acylated by trans-(alpha-methyl)-glutaconic acid residues. The biosynthesis of ferrichrome A depends on the hydroxylation of ornithine to N(5)-hydroxyornithine, catalyzed by the monooxygenase omo1. The second step, the acylation of N(5)-hydroxy-L-ornithine is probably catalyzed by the N-acyltransferase ato1. Finally, assembly of ferrichrome A is catalyzed by the nonribosomal peptide synthase (NRPS) fso1. This Omphalotus olearius (Jack o'lantern) protein is Acyltransferase ato1.